The primary structure comprises 237 residues: Uridylate kinase (237 aa).

9–12 lines the ATP pocket; the sequence is KLSG. Positions 17-22 are involved in allosteric activation by GTP; sequence GSQGYG. Position 51 (Gly-51) interacts with UMP. ATP is bound by residues Gly-52 and Arg-56. UMP is bound by residues Asp-71 and 132–139; that span reads CGNPFFTT. Positions 159, 165, and 168 each coordinate ATP.

The protein belongs to the UMP kinase family. In terms of assembly, homohexamer.

The protein localises to the cytoplasm. It carries out the reaction UMP + ATP = UDP + ADP. It functions in the pathway pyrimidine metabolism; CTP biosynthesis via de novo pathway; UDP from UMP (UMPK route): step 1/1. Its activity is regulated as follows. Allosterically activated by GTP. Inhibited by UTP. Its function is as follows. Catalyzes the reversible phosphorylation of UMP to UDP. This is Uridylate kinase from Synechococcus sp. (strain CC9605).